The chain runs to 75 residues: DNA-directed RNA polymerase subunit omega (75 aa).

It belongs to the RNA polymerase subunit omega family. In terms of assembly, in cyanobacteria the RNAP catalytic core is composed of 2 alpha, 1 beta, 1 beta', 1 gamma and 1 omega subunit. When a sigma factor is associated with the core the holoenzyme is formed, which can initiate transcription.

The catalysed reaction is RNA(n) + a ribonucleoside 5'-triphosphate = RNA(n+1) + diphosphate. In terms of biological role, promotes RNA polymerase assembly. Latches the N- and C-terminal regions of the beta' subunit thereby facilitating its interaction with the beta and alpha subunits. This is DNA-directed RNA polymerase subunit omega from Microcystis aeruginosa (strain NIES-843 / IAM M-2473).